The following is a 494-amino-acid chain: Putative transporter SVOPL (494 aa).

Helical transmembrane passes span 48–68, 86–106, 121–141, 179–199, 203–223, 281–301, 350–370, 385–405, 431–451, and 460–480; these read IALF…IMLI, VAFV…LFGL, FLWG…IWFV, VFWL…IPTI, WLIR…KFIP, TLQI…VILA, IIST…INFL, LFFL…FLFM, AIGM…APFI, and FLGA…SAFT.

It belongs to the major facilitator superfamily.

It is found in the membrane. This chain is Putative transporter SVOPL (Svopl), found in Mus musculus (Mouse).